Consider the following 493-residue polypeptide: MAVHRSLLNKPTWCRVAFWWWMLVMVMRIQGTNGKEQDSVIKLPTQEVDAESDEVGTRWAVLVAGSNGYGNYRHQADVCHAYQLLIKGGVKEENIVVFMYDDIATHELNPRPGVIINNPQGPDVYAGVPKDYTGESVTSHNFFAVLLGDKSKVKGGSGKVINSKPEDRIFVYYSDHGGPGVLGMPNMPYLYAMDFIDVLKKKHASGGYKEMVIYVEACESGSIFEGIMPKDLNIYVTTASNAQENSWGTYCPGMYPPPPPEYITCLGDLYSVAWMEDSESHNLKKESVEQQYQSVKQRTSNFEAYAMGSHVMQYGDANMTAEKLYLYHGFDPATVNFPPHNGRLKSKMEVVNQRDAELLFMWQVYQRSNHLPEKKTDILKQIEEIVKHRKHLDGSVELIGVLLYGPEKASSVLRSVRTTGLPLVDDWTCLKSMVRVYETHCGSLTQYGMKHMRAFANICNSGVSETSMEKACVAACGGYHAGLLHPSNTGYSA.

The N-terminal stretch at Met-1–Gly-34 is a signal peptide. Positions Lys-35–Asp-53 are excised as a propeptide. Residue His-176 is part of the active site. Cys-218 (nucleophile) is an active-site residue. An intrachain disulfide couples Cys-251 to Cys-265. Asn-318 is a glycosylation site (N-linked (GlcNAc...) asparagine). Disulfide bonds link Cys-429–Cys-459 and Cys-441–Cys-476.

It belongs to the peptidase C13 family.

Its function is as follows. Asparagine-specific endopeptidase involved in the processing of vacuolar seed protein precursors into the mature forms. This is Vacuolar-processing enzyme from Phaseolus vulgaris (Kidney bean).